A 257-amino-acid polypeptide reads, in one-letter code: Putative cysteine-rich repeat secretory protein 28 (257 aa).

An N-terminal signal peptide occupies residues 1-26 (MFSTFGSVPILTVVAIQLFLIRNVLS). 2 consecutive Gnk2-homologous domains span residues 32 to 136 (AYLH…TVDS) and 142 to 254 (YEND…LYPF).

The protein belongs to the cysteine-rich repeat secretory protein family.

It localises to the secreted. This Arabidopsis thaliana (Mouse-ear cress) protein is Putative cysteine-rich repeat secretory protein 28 (CRRSP28).